A 610-amino-acid chain; its full sequence is Elongation factor 4 (610 aa).

The tr-type G domain maps to 7-189; the sequence is SRIRNFSIIA…AIVQRIPPPK (183 aa). Residues 19–24 and 136–139 each bind GTP; these read DHGKST and NKID.

The protein belongs to the TRAFAC class translation factor GTPase superfamily. Classic translation factor GTPase family. LepA subfamily.

Its subcellular location is the cell inner membrane. The enzyme catalyses GTP + H2O = GDP + phosphate + H(+). Its function is as follows. Required for accurate and efficient protein synthesis under certain stress conditions. May act as a fidelity factor of the translation reaction, by catalyzing a one-codon backward translocation of tRNAs on improperly translocated ribosomes. Back-translocation proceeds from a post-translocation (POST) complex to a pre-translocation (PRE) complex, thus giving elongation factor G a second chance to translocate the tRNAs correctly. Binds to ribosomes in a GTP-dependent manner. The polypeptide is Elongation factor 4 (Thermus thermophilus (strain ATCC BAA-163 / DSM 7039 / HB27)).